Here is a 206-residue protein sequence, read N- to C-terminus: CBS domain-containing protein CBSX3, mitochondrial (206 aa).

The transit peptide at 1–39 (MQGVIRSFVSGGNVVKGSVLQHLRVINPAIQPSVFCSRS) directs the protein to the mitochondrion. 2 consecutive CBS domains span residues 61-127 (MKSK…GRSS) and 136-194 (MTEE…HREE).

It is found in the mitochondrion. The protein is CBS domain-containing protein CBSX3, mitochondrial (CBSX3) of Arabidopsis thaliana (Mouse-ear cress).